Reading from the N-terminus, the 151-residue chain is Cyanate hydratase (151 aa).

Residues R92, E95, and S118 contribute to the active site.

It belongs to the cyanase family.

The catalysed reaction is cyanate + hydrogencarbonate + 3 H(+) = NH4(+) + 2 CO2. Catalyzes the reaction of cyanate with bicarbonate to produce ammonia and carbon dioxide. This Coprinopsis cinerea (strain Okayama-7 / 130 / ATCC MYA-4618 / FGSC 9003) (Inky cap fungus) protein is Cyanate hydratase.